The following is a 212-amino-acid chain: Large ribosomal subunit protein uL3 (212 aa).

Residues 134–155 (RNSHGNSLSHRAPGSIGQNQSP) form a disordered region. Q153 carries the post-translational modification N5-methylglutamine.

It belongs to the universal ribosomal protein uL3 family. As to quaternary structure, part of the 50S ribosomal subunit. Forms a cluster with proteins L14 and L19. Post-translationally, methylated by PrmB.

One of the primary rRNA binding proteins, it binds directly near the 3'-end of the 23S rRNA, where it nucleates assembly of the 50S subunit. This Pseudoalteromonas atlantica (strain T6c / ATCC BAA-1087) protein is Large ribosomal subunit protein uL3.